The sequence spans 28 residues: Nicotinic acetylcholine receptor-binding protein Mnn-3C (28 aa).

Cysteine 3 and cysteine 24 form a disulfide bridge.

It belongs to the three-finger toxin family. Short-chain subfamily. In terms of tissue distribution, expressed by the venom gland.

Its subcellular location is the secreted. Functionally, binds and may inhibit nicotinic acetylcholine receptors (nAChR). The sequence is that of Nicotinic acetylcholine receptor-binding protein Mnn-3C from Micrurus nigrocinctus (Central American coral snake).